The primary structure comprises 470 residues: Cysteine--tRNA ligase (470 aa).

A Zn(2+)-binding site is contributed by cysteine 31. Positions 33-43 match the 'HIGH' region motif; that stretch reads PTVYDYVHIGH. Residues cysteine 209, histidine 234, and glutamate 238 each contribute to the Zn(2+) site. A 'KMSKS' region motif is present at residues 266–270; sequence KMSKS. An ATP-binding site is contributed by lysine 269.

The protein belongs to the class-I aminoacyl-tRNA synthetase family. Zn(2+) serves as cofactor.

The protein localises to the cytoplasm. The enzyme catalyses tRNA(Cys) + L-cysteine + ATP = L-cysteinyl-tRNA(Cys) + AMP + diphosphate. In Saccharolobus solfataricus (strain ATCC 35092 / DSM 1617 / JCM 11322 / P2) (Sulfolobus solfataricus), this protein is Cysteine--tRNA ligase.